Consider the following 135-residue polypeptide: MAEAKTGAKAAPRVAKAAKAAPKKAAPNDAEAIGAANAANVKGPKHTPRTPKPRGRRKTRIGYVVSDKMQKTIVVELEDRMRHPLYGKIIRTTKKVKAHDEDSVAGIGDRVSLMETRPLSATKRWRLVEILEKAK.

Residues 1–59 (MAEAKTGAKAAPRVAKAAKAAPKKAAPNDAEAIGAANAANVKGPKHTPRTPKPRGRRKT) are disordered. Residues 8–42 (AKAAPRVAKAAKAAPKKAAPNDAEAIGAANAANVK) are compositionally biased toward low complexity. Residues 43–59 (GPKHTPRTPKPRGRRKT) show a composition bias toward basic residues.

It belongs to the universal ribosomal protein uS17 family. Part of the 30S ribosomal subunit.

Functionally, one of the primary rRNA binding proteins, it binds specifically to the 5'-end of 16S ribosomal RNA. The sequence is that of Small ribosomal subunit protein uS17 from Mycobacterium bovis (strain ATCC BAA-935 / AF2122/97).